Consider the following 635-residue polypeptide: Elongation factor 4 (635 aa).

The tr-type G domain occupies 11–193; it reads EKIRNFSIIA…QIVEKVPAPT (183 aa). GTP-binding positions include 23–28 and 140–143; these read DHGKST and NKID.

It belongs to the TRAFAC class translation factor GTPase superfamily. Classic translation factor GTPase family. LepA subfamily.

The protein localises to the cell membrane. It catalyses the reaction GTP + H2O = GDP + phosphate + H(+). In terms of biological role, required for accurate and efficient protein synthesis under certain stress conditions. May act as a fidelity factor of the translation reaction, by catalyzing a one-codon backward translocation of tRNAs on improperly translocated ribosomes. Back-translocation proceeds from a post-translocation (POST) complex to a pre-translocation (PRE) complex, thus giving elongation factor G a second chance to translocate the tRNAs correctly. Binds to ribosomes in a GTP-dependent manner. This is Elongation factor 4 from Streptococcus pyogenes serotype M12 (strain MGAS2096).